Reading from the N-terminus, the 328-residue chain is Mannitol-1-phosphate 5-dehydrogenase (328 aa).

3 to 14 (LIHFGAGNIGCG) is a binding site for NAD(+).

The protein belongs to the mannitol dehydrogenase family.

The enzyme catalyses D-mannitol 1-phosphate + NAD(+) = beta-D-fructose 6-phosphate + NADH + H(+). This chain is Mannitol-1-phosphate 5-dehydrogenase (mtlD), found in Mycoplasma mycoides subsp. mycoides SC (strain CCUG 32753 / NCTC 10114 / PG1).